Consider the following 328-residue polypeptide: Glutathionyl-hydroquinone reductase YqjG (328 aa).

The active-site Nucleophile is the C63. Residues W96, 130-133, and 148-149 contribute to the glutathione site; these read RVTV and ES. The 125-residue stretch at 172–296 folds into the GST C-terminal domain; sequence PPALQTKIDE…VNFDHIRNHY (125 aa). The active-site Proton donor/acceptor is the Y195. The interval 203–311 is dimerization; that stretch reads QEAYDEAVAK…TINPTGIISI (109 aa).

The protein belongs to the GST superfamily. Xi-class GSH transferase family. In terms of assembly, homodimer.

The catalysed reaction is 2-(glutathione-S-yl)-hydroquinone + glutathione = hydroquinone + glutathione disulfide. Its function is as follows. Catalyzes glutathione (GSH)-dependent reduction of glutathionyl-hydroquinones (GS-HQs) to the corresponding hydroquinones. Can use a variety of GS-HQs as substrates, such as GS-p-hydroquinone (GS-HQ), GS-hydroxy-p-hydroquinone (GS-HHQ), GS-methyl-p-hydroquinone (GS-MHQ), GS-menadiol, and GS-trichloro-p-hydroquinone (GS-TriCH). Also displays GSH-dependent disulfide-bond reduction activity toward HED (2-hydroxyethyl disulfide), and is able to catalyze DMA (dimethylarsinate) reduction. Exhibits no GSH transferase activity with 1-chloro-2,4-dinitrobenzene (CDNB). The sequence is that of Glutathionyl-hydroquinone reductase YqjG (yqjG) from Escherichia coli (strain K12).